The primary structure comprises 197 residues: Molybdenum cofactor guanylyltransferase (197 aa).

GTP-binding positions include 10-12, K23, N51, D69, and D99; that span reads LAG. Position 99 (D99) interacts with Mg(2+).

It belongs to the MobA family. Monomer. It depends on Mg(2+) as a cofactor.

It localises to the cytoplasm. The enzyme catalyses Mo-molybdopterin + GTP + H(+) = Mo-molybdopterin guanine dinucleotide + diphosphate. Functionally, transfers a GMP moiety from GTP to Mo-molybdopterin (Mo-MPT) cofactor (Moco or molybdenum cofactor) to form Mo-molybdopterin guanine dinucleotide (Mo-MGD) cofactor. This is Molybdenum cofactor guanylyltransferase from Shewanella sp. (strain MR-4).